We begin with the raw amino-acid sequence, 895 residues long: Alanine--tRNA ligase (895 aa).

Histidine 586, histidine 590, cysteine 690, and histidine 694 together coordinate Zn(2+).

Belongs to the class-II aminoacyl-tRNA synthetase family. The cofactor is Zn(2+).

The protein resides in the cytoplasm. The catalysed reaction is tRNA(Ala) + L-alanine + ATP = L-alanyl-tRNA(Ala) + AMP + diphosphate. In terms of biological role, catalyzes the attachment of alanine to tRNA(Ala) in a two-step reaction: alanine is first activated by ATP to form Ala-AMP and then transferred to the acceptor end of tRNA(Ala). Also edits incorrectly charged Ser-tRNA(Ala) and Gly-tRNA(Ala) via its editing domain. The chain is Alanine--tRNA ligase from Korarchaeum cryptofilum (strain OPF8).